The sequence spans 25 residues: Small ribosomal subunit protein eS32 (25 aa).

The segment at 1-25 (MRAKWRKKRMRRLKRKRRKMRQRSK) is disordered.

It belongs to the eukaryotic ribosomal protein eS32 family. Component of the large ribosomal subunit.

The protein resides in the cytoplasm. Its function is as follows. Component of the small ribosomal subunit. The ribosome is a large ribonucleoprotein complex responsible for the synthesis of proteins in the cell. This chain is Small ribosomal subunit protein eS32 (rpl41), found in Cyprinus carpio (Common carp).